The sequence spans 356 residues: 11-beta-hydroxysteroid dehydrogenase (356 aa).

A helical; Signal-anchor for type II membrane protein membrane pass occupies residues 10 to 30 (LVVPPAGLLMLAFAWPSLAFF). The Proline-knob signature appears at 13 to 26 (PPAGLLMLAFAWPS). 54–85 (GASSGIGEQIAYQYAKRRANLVLVARREHRLR) serves as a coordination point for NADP(+). S184 provides a ligand contact to substrate. Residue Y197 is the Proton acceptor of the active site. NADP(+)-binding positions include 197 to 201 (YNAAK) and K201.

This sequence belongs to the short-chain dehydrogenases/reductases (SDR) family. Expressed in megagametophytes (at protein level).

Its subcellular location is the lipid droplet. It localises to the membrane. It catalyses the reaction an 11beta-hydroxysteroid + NADP(+) = an 11-oxosteroid + NADPH + H(+). It carries out the reaction corticosterone + NADP(+) = 11-dehydrocorticosterone + NADPH + H(+). The catalysed reaction is 17beta-estradiol + NADP(+) = estrone + NADPH + H(+). Has dehydrogenase activity against corticosterone (11 beta-hydroxysteroid) and estradiol (17 beta-hydroxysteroid) in the presence of NADP(+). May be involved in signal transduction regulated by various sterols. This Pinus massoniana (Chinese red pine) protein is 11-beta-hydroxysteroid dehydrogenase.